The following is a 667-amino-acid chain: UvrABC system protein C (667 aa).

The region spanning 43–122 is the GIY-YIG domain; sequence AEPGCYLMRD…IKNQQPHFNV (80 aa). In terms of domain architecture, UVR spans 232–267; it reads QELKVLLEKQMERYSDRMDYESAANIRDQIKGLEQL.

It belongs to the UvrC family. In terms of assembly, interacts with UvrB in an incision complex.

The protein resides in the cytoplasm. In terms of biological role, the UvrABC repair system catalyzes the recognition and processing of DNA lesions. UvrC both incises the 5' and 3' sides of the lesion. The N-terminal half is responsible for the 3' incision and the C-terminal half is responsible for the 5' incision. This Prochlorococcus marinus (strain MIT 9313) protein is UvrABC system protein C.